Here is a 299-residue protein sequence, read N- to C-terminus: Bifunctional protein FolD (299 aa).

Residues 168-170 (GRS), Ser-193, and Ile-234 contribute to the NADP(+) site.

Belongs to the tetrahydrofolate dehydrogenase/cyclohydrolase family. In terms of assembly, homodimer.

The enzyme catalyses (6R)-5,10-methylene-5,6,7,8-tetrahydrofolate + NADP(+) = (6R)-5,10-methenyltetrahydrofolate + NADPH. It carries out the reaction (6R)-5,10-methenyltetrahydrofolate + H2O = (6R)-10-formyltetrahydrofolate + H(+). It functions in the pathway one-carbon metabolism; tetrahydrofolate interconversion. Functionally, catalyzes the oxidation of 5,10-methylenetetrahydrofolate to 5,10-methenyltetrahydrofolate and then the hydrolysis of 5,10-methenyltetrahydrofolate to 10-formyltetrahydrofolate. In Bartonella bacilliformis (strain ATCC 35685 / KC583 / Herrer 020/F12,63), this protein is Bifunctional protein FolD.